A 394-amino-acid polypeptide reads, in one-letter code: Probable fatty acyl-CoA transferase Rv3272 (394 aa).

Residue Asp-175 is the Nucleophile of the active site.

The protein belongs to the CoA-transferase III family. In terms of assembly, homodimer.

Functionally, probably involved in fatty acid metabolism. Binds to fatty acyl-CoAs of varying carbon chain lengths, with the highest binding affinity for palmitoyl-CoA (C16:0). In vitro, alters the cell wall lipid profile and protects mycobacteria from acidic, oxidative and antibiotic stress. May play a significant role in host-pathogen interaction. This chain is Probable fatty acyl-CoA transferase Rv3272, found in Mycobacterium tuberculosis (strain ATCC 25618 / H37Rv).